The chain runs to 179 residues: MDEMLILVDADDNAIGSQSKTRVHQQGLLHRAFSIFIFDSQGRLLLQQRAFSKYHSAGLWTNSCCGHPRWGESTLAAAQRRLQEEMGFSAELQQVSSFTYQAAVPGDLIEHEFDHIYVGLFDGKPQGAPEEAHSWSWTDIQQLTDETTRNPEKFTVWFLTIMKDLGANEMERWARLAAS.

Positions 24 and 30 each coordinate Mn(2+). In terms of domain architecture, Nudix hydrolase spans 28–160; the sequence is LLHRAFSIFI…PEKFTVWFLT (133 aa). The active site involves cysteine 65. Histidine 67 lines the Mn(2+) pocket. Glutamate 85 is a Mg(2+) binding site. Mn(2+) is bound by residues glutamate 110 and glutamate 112. The active site involves glutamate 112.

This sequence belongs to the IPP isomerase type 1 family. As to quaternary structure, homodimer. The cofactor is Mg(2+). It depends on Mn(2+) as a cofactor.

It is found in the cytoplasm. The catalysed reaction is isopentenyl diphosphate = dimethylallyl diphosphate. It functions in the pathway isoprenoid biosynthesis; dimethylallyl diphosphate biosynthesis; dimethylallyl diphosphate from isopentenyl diphosphate: step 1/1. Its function is as follows. Catalyzes the 1,3-allylic rearrangement of the homoallylic substrate isopentenyl (IPP) to its highly electrophilic allylic isomer, dimethylallyl diphosphate (DMAPP). The chain is Isopentenyl-diphosphate Delta-isomerase from Serratia proteamaculans (strain 568).